Consider the following 500-residue polypeptide: Probable malate:quinone oxidoreductase (500 aa).

This sequence belongs to the MQO family. FAD is required as a cofactor.

The enzyme catalyses (S)-malate + a quinone = a quinol + oxaloacetate. Its pathway is carbohydrate metabolism; tricarboxylic acid cycle; oxaloacetate from (S)-malate (quinone route): step 1/1. This is Probable malate:quinone oxidoreductase from Halalkalibacterium halodurans (strain ATCC BAA-125 / DSM 18197 / FERM 7344 / JCM 9153 / C-125) (Bacillus halodurans).